An 873-amino-acid chain; its full sequence is Alanine--tRNA ligase (873 aa).

Residues H562, H566, C664, and H668 each contribute to the Zn(2+) site.

Belongs to the class-II aminoacyl-tRNA synthetase family. It depends on Zn(2+) as a cofactor.

The protein resides in the cytoplasm. The catalysed reaction is tRNA(Ala) + L-alanine + ATP = L-alanyl-tRNA(Ala) + AMP + diphosphate. In terms of biological role, catalyzes the attachment of alanine to tRNA(Ala) in a two-step reaction: alanine is first activated by ATP to form Ala-AMP and then transferred to the acceptor end of tRNA(Ala). Also edits incorrectly charged Ser-tRNA(Ala) and Gly-tRNA(Ala) via its editing domain. The protein is Alanine--tRNA ligase of Shewanella amazonensis (strain ATCC BAA-1098 / SB2B).